The primary structure comprises 352 residues: Long-chain-alcohol O-fatty-acyltransferase (352 aa).

8 helical membrane-spanning segments follow: residues 13-33 (VWIS…VAPH), 34-54 (GGAL…FLPL), 67-87 (LYLV…LGPL), 128-148 (KVVL…IYEF), 155-175 (FVIS…TLAA), 239-259 (VAGA…VFFF), 267-287 (SWEV…EMVV), and 303-323 (GALT…PQLV).

Belongs to the wax synthase family.

The protein resides in the microsome membrane. The enzyme catalyses a long chain fatty alcohol + a fatty acyl-CoA = a wax ester + CoA. Functionally, catalyzes the final step in the synthesis of long-chain linear esters (waxes). Has activity with both saturated and monounsaturated acyl-CoA ranging from 14 to 24 carbons in length, but C20:1 acyl-CoA is the preferred substrate. The sequence is that of Long-chain-alcohol O-fatty-acyltransferase from Simmondsia chinensis (Jojoba).